Here is a 317-residue protein sequence, read N- to C-terminus: Cytochrome c biogenesis protein CcsA (317 aa).

Helical transmembrane passes span 9 to 29 (ILTH…LITF), 46 to 63 (TATA…WVYS), 71 to 91 (LYES…IFDF), 98 to 118 (LSAI…SGFL), 143 to 163 (MVLG…LLVI), 225 to 245 (IISL…VWAN), 258 to 273 (ETWA…IYLH), and 286 to 306 (AIVA…VNLL).

It belongs to the CcmF/CycK/Ccl1/NrfE/CcsA family. In terms of assembly, may interact with Ccs1.

It localises to the plastid. The protein localises to the chloroplast thylakoid membrane. Its function is as follows. Required during biogenesis of c-type cytochromes (cytochrome c6 and cytochrome f) at the step of heme attachment. The protein is Cytochrome c biogenesis protein CcsA of Citrus sinensis (Sweet orange).